The following is an 88-amino-acid chain: MHVHKGLIFLSFFSPIYLSLLLNGSIFFFYYAQRALHDSFFFPNELLRCQICLCSLFWMVTVINLKRFFARMVNISIYQPSRNRLVRY.

A run of 2 helical transmembrane segments spans residues 8–28 (IFLS…SIFF) and 45–65 (ELLR…VINL).

Its subcellular location is the membrane. This is an uncharacterized protein from Saccharomyces cerevisiae (strain ATCC 204508 / S288c) (Baker's yeast).